The primary structure comprises 412 residues: Glucose-1-phosphate adenylyltransferase (412 aa).

Residues G163, 179 to 180 (EK), and S197 each bind alpha-D-glucose 1-phosphate.

Belongs to the bacterial/plant glucose-1-phosphate adenylyltransferase family. Homotetramer.

The enzyme catalyses alpha-D-glucose 1-phosphate + ATP + H(+) = ADP-alpha-D-glucose + diphosphate. It participates in glycan biosynthesis; glycogen biosynthesis. In terms of biological role, involved in the biosynthesis of ADP-glucose, a building block required for the elongation reactions to produce glycogen. Catalyzes the reaction between ATP and alpha-D-glucose 1-phosphate (G1P) to produce pyrophosphate and ADP-Glc. In Frankia casuarinae (strain DSM 45818 / CECT 9043 / HFP020203 / CcI3), this protein is Glucose-1-phosphate adenylyltransferase.